We begin with the raw amino-acid sequence, 170 residues long: MPLTWKDSGLRWYWVVVLVFLADQLSKQWVLANFDLFESVQLLPFFNFTYVRNYGAAFSFLSEAGGWQRWLFTIVAVGFSSLLTVWLRKQSASLLKLNLAYTLVIGGALGNLVDRLMHGFVVDFIDFYWGKSHYPAFNIADSAIFIGAVLIIWDSFFNSQSEQDKTEEVK.

Helical transmembrane passes span Trp12–Ala32, Trp67–Leu87, and Ser93–Val113. Residues Asp123 and Asp141 contribute to the active site. Residues Phe137–Phe157 traverse the membrane as a helical segment.

Belongs to the peptidase A8 family.

The protein resides in the cell inner membrane. The enzyme catalyses Release of signal peptides from bacterial membrane prolipoproteins. Hydrolyzes -Xaa-Yaa-Zaa-|-(S,diacylglyceryl)Cys-, in which Xaa is hydrophobic (preferably Leu), and Yaa (Ala or Ser) and Zaa (Gly or Ala) have small, neutral side chains.. Its pathway is protein modification; lipoprotein biosynthesis (signal peptide cleavage). Functionally, this protein specifically catalyzes the removal of signal peptides from prolipoproteins. This chain is Lipoprotein signal peptidase, found in Shewanella oneidensis (strain ATCC 700550 / JCM 31522 / CIP 106686 / LMG 19005 / NCIMB 14063 / MR-1).